A 646-amino-acid polypeptide reads, in one-letter code: Phosphomethylpyrimidine synthase (646 aa).

Substrate is bound by residues Asn235, Met264, Tyr293, His329, 349–351, 390–393, and Glu429; these read SRG and DGLR. Residue His433 participates in Zn(2+) binding. Tyr456 is a substrate binding site. Zn(2+) is bound at residue His497. [4Fe-4S] cluster contacts are provided by Cys577, Cys580, and Cys585. A disordered region spans residues 624 to 646; sequence KSEEFRATGSELYHPAVHAEADE.

This sequence belongs to the ThiC family. As to quaternary structure, homodimer. It depends on [4Fe-4S] cluster as a cofactor.

The enzyme catalyses 5-amino-1-(5-phospho-beta-D-ribosyl)imidazole + S-adenosyl-L-methionine = 4-amino-2-methyl-5-(phosphooxymethyl)pyrimidine + CO + 5'-deoxyadenosine + formate + L-methionine + 3 H(+). The protein operates within cofactor biosynthesis; thiamine diphosphate biosynthesis. In terms of biological role, catalyzes the synthesis of the hydroxymethylpyrimidine phosphate (HMP-P) moiety of thiamine from aminoimidazole ribotide (AIR) in a radical S-adenosyl-L-methionine (SAM)-dependent reaction. The polypeptide is Phosphomethylpyrimidine synthase (Vibrio parahaemolyticus serotype O3:K6 (strain RIMD 2210633)).